A 976-amino-acid polypeptide reads, in one-letter code: Probable basic-leucine zipper transcription factor Q (976 aa).

Coiled coils occupy residues 57–110 and 136–287; these read AIDS…QYQQ and QQQQ…QQQQ. The tract at residues 104–128 is disordered; the sequence is YQQQYQQPYTTPSPPDQIDYNQQLS. 2 stretches are compositionally biased toward polar residues: residues 374–385 and 393–411; these read TNFNGTNNSTPN and KLSS…SPPS. A disordered region spans residues 374–499; sequence TNFNGTNNST…PIDSNGDFDL (126 aa). 2 stretches are compositionally biased toward low complexity: residues 420-468 and 476-490; these read PKNN…FNNN and STTT…MTSP. The bZIP domain maps to 504–567; sequence EKKKSISRIN…GVEVMRPEPE (64 aa). The segment at 505-507 is basic motif; that stretch reads KKK. Positions 509-516 are leucine-zipper; the sequence is ISRINQNL. Over residues 855 to 938 the composition is skewed to low complexity; it reads ENQSNNFGNN…VNSNNNNFNN (84 aa). A disordered region spans residues 855–957; it reads ENQSNNFGNN…SADAIPYPST (103 aa).

This sequence belongs to the bZIP family.

It is found in the nucleus. Its function is as follows. Probable transcriptional regulator. In Dictyostelium discoideum (Social amoeba), this protein is Probable basic-leucine zipper transcription factor Q (bzpQ).